Reading from the N-terminus, the 272-residue chain is Hydroxyethylthiazole kinase (272 aa).

Methionine 45 contacts substrate. ATP-binding residues include arginine 121 and threonine 168. Glycine 195 provides a ligand contact to substrate.

The protein belongs to the Thz kinase family. Homotrimer. Mg(2+) serves as cofactor.

The catalysed reaction is 5-(2-hydroxyethyl)-4-methylthiazole + ATP = 4-methyl-5-(2-phosphooxyethyl)-thiazole + ADP + H(+). The protein operates within cofactor biosynthesis; thiamine diphosphate biosynthesis; 4-methyl-5-(2-phosphoethyl)-thiazole from 5-(2-hydroxyethyl)-4-methylthiazole: step 1/1. Functionally, catalyzes the phosphorylation of the hydroxyl group of 4-methyl-5-beta-hydroxyethylthiazole (THZ). The chain is Hydroxyethylthiazole kinase from Bacillus subtilis (strain 168).